The following is a 190-amino-acid chain: 3-isopropylmalate dehydratase small subunit (190 aa).

It belongs to the LeuD family. LeuD type 1 subfamily. As to quaternary structure, heterodimer of LeuC and LeuD.

The enzyme catalyses (2R,3S)-3-isopropylmalate = (2S)-2-isopropylmalate. The protein operates within amino-acid biosynthesis; L-leucine biosynthesis; L-leucine from 3-methyl-2-oxobutanoate: step 2/4. In terms of biological role, catalyzes the isomerization between 2-isopropylmalate and 3-isopropylmalate, via the formation of 2-isopropylmaleate. The chain is 3-isopropylmalate dehydratase small subunit from Staphylococcus aureus (strain MSSA476).